We begin with the raw amino-acid sequence, 238 residues long: MAVVTLAEMMEAGAHFGHQTRRWNPKMSRYIYCARNGVHIIDLVQTAVCMNNAYKWVRSAARSGKRFLFVGTKKQASEVVAQEALRCGSSYVNQRWLGGMLTNWTTMKARIDRLKDLERMESSGAIAMRPKKEGAVLRRELERLQKYLGGLKNMRRIPDVVVLVDQRRETNAVLEARKLDISLVSMLDTNCDPDLCEVPIPCNDDAVRSIQLVLSRLADAINEGRHGGQDGRGDDGQG.

Belongs to the universal ribosomal protein uS2 family.

The polypeptide is Small ribosomal subunit protein uS2 (Synechococcus sp. (strain CC9311)).